We begin with the raw amino-acid sequence, 154 residues long: MutT-like protein (154 aa).

One can recognise a Nudix hydrolase domain in the interval 15 to 136; the sequence is PLHSVSVAGV…YAIRLLDALD (122 aa). 4 residues coordinate Mg(2+): Gly48, Glu63, Glu66, and Glu67. The Nudix box signature appears at 48–69; the sequence is GVLELDETPETGVAREVWEETG.

The protein belongs to the Nudix hydrolase family.

This is MutT-like protein from Streptomyces ambofaciens.